Here is a 253-residue protein sequence, read N- to C-terminus: Ubiquinone/menaquinone biosynthesis C-methyltransferase UbiE (253 aa).

S-adenosyl-L-methionine contacts are provided by residues threonine 76, aspartate 97, and 125–126 (NA).

The protein belongs to the class I-like SAM-binding methyltransferase superfamily. MenG/UbiE family.

It carries out the reaction a 2-demethylmenaquinol + S-adenosyl-L-methionine = a menaquinol + S-adenosyl-L-homocysteine + H(+). It catalyses the reaction a 2-methoxy-6-(all-trans-polyprenyl)benzene-1,4-diol + S-adenosyl-L-methionine = a 5-methoxy-2-methyl-3-(all-trans-polyprenyl)benzene-1,4-diol + S-adenosyl-L-homocysteine + H(+). It participates in quinol/quinone metabolism; menaquinone biosynthesis; menaquinol from 1,4-dihydroxy-2-naphthoate: step 2/2. The protein operates within cofactor biosynthesis; ubiquinone biosynthesis. Its function is as follows. Methyltransferase required for the conversion of demethylmenaquinol (DMKH2) to menaquinol (MKH2) and the conversion of 2-polyprenyl-6-methoxy-1,4-benzoquinol (DDMQH2) to 2-polyprenyl-3-methyl-6-methoxy-1,4-benzoquinol (DMQH2). The chain is Ubiquinone/menaquinone biosynthesis C-methyltransferase UbiE from Nitrobacter hamburgensis (strain DSM 10229 / NCIMB 13809 / X14).